The primary structure comprises 59 residues: MNIDELTKRINELHKKHKEEGLSEDEHKEREELRKEYINRFKSNLREQLKGIEPKNKKN.

Residues 1-30 (MNIDELTKRINELHKKHKEEGLSEDEHKER) form a disordered region.

The protein belongs to the UPF0291 family.

The protein resides in the cytoplasm. The sequence is that of UPF0291 protein CPR_1073 from Clostridium perfringens (strain SM101 / Type A).